Consider the following 682-residue polypeptide: Potassium-transporting ATPase ATP-binding subunit (682 aa).

Transmembrane regions (helical) follow at residues 35–55 (VMFI…AMAG), 62–82 (ATFT…ANFA), 219–239 (IALT…TATI), and 254–274 (VLVA…LSAI). D307 serves as the catalytic 4-aspartylphosphate intermediate. Residues D344, E348, 377 to 384 (FTAQTRMS), and K395 each bind ATP. Mg(2+) is bound by residues D518 and D522. The next 3 membrane-spanning stretches (helical) occupy residues 588 to 608 (FAII…LNVM), 616 to 636 (AILS…PLAL), and 656 to 676 (IYGL…DLLL).

It belongs to the cation transport ATPase (P-type) (TC 3.A.3) family. Type IA subfamily. In terms of assembly, the system is composed of three essential subunits: KdpA, KdpB and KdpC.

The protein resides in the cell inner membrane. It catalyses the reaction K(+)(out) + ATP + H2O = K(+)(in) + ADP + phosphate + H(+). Functionally, part of the high-affinity ATP-driven potassium transport (or Kdp) system, which catalyzes the hydrolysis of ATP coupled with the electrogenic transport of potassium into the cytoplasm. This subunit is responsible for energy coupling to the transport system and for the release of the potassium ions to the cytoplasm. The sequence is that of Potassium-transporting ATPase ATP-binding subunit from Klebsiella pneumoniae (strain 342).